The sequence spans 453 residues: Bifunctional protein GlmU (453 aa).

A pyrophosphorylase region spans residues M1–R227. UDP-N-acetyl-alpha-D-glucosamine is bound by residues L8–G11, K22, Q73, G78–T79, S100–D102, G137, E152, N167, and N225. Residue D102 coordinates Mg(2+). N225 is a binding site for Mg(2+). The linker stretch occupies residues Q228 to E248. The interval G249–K453 is N-acetyltransferase. Residues R331 and K349 each contribute to the UDP-N-acetyl-alpha-D-glucosamine site. The Proton acceptor role is filled by H361. UDP-N-acetyl-alpha-D-glucosamine contacts are provided by Y364 and N375. Acetyl-CoA-binding positions include A378, N384–Y385, S403, A421, and R438. A disordered region spans residues P430–K453.

This sequence in the N-terminal section; belongs to the N-acetylglucosamine-1-phosphate uridyltransferase family. The protein in the C-terminal section; belongs to the transferase hexapeptide repeat family. As to quaternary structure, homotrimer. Requires Mg(2+) as cofactor.

The protein localises to the cytoplasm. It carries out the reaction alpha-D-glucosamine 1-phosphate + acetyl-CoA = N-acetyl-alpha-D-glucosamine 1-phosphate + CoA + H(+). The catalysed reaction is N-acetyl-alpha-D-glucosamine 1-phosphate + UTP + H(+) = UDP-N-acetyl-alpha-D-glucosamine + diphosphate. Its pathway is nucleotide-sugar biosynthesis; UDP-N-acetyl-alpha-D-glucosamine biosynthesis; N-acetyl-alpha-D-glucosamine 1-phosphate from alpha-D-glucosamine 6-phosphate (route II): step 2/2. The protein operates within nucleotide-sugar biosynthesis; UDP-N-acetyl-alpha-D-glucosamine biosynthesis; UDP-N-acetyl-alpha-D-glucosamine from N-acetyl-alpha-D-glucosamine 1-phosphate: step 1/1. It participates in bacterial outer membrane biogenesis; LPS lipid A biosynthesis. Functionally, catalyzes the last two sequential reactions in the de novo biosynthetic pathway for UDP-N-acetylglucosamine (UDP-GlcNAc). The C-terminal domain catalyzes the transfer of acetyl group from acetyl coenzyme A to glucosamine-1-phosphate (GlcN-1-P) to produce N-acetylglucosamine-1-phosphate (GlcNAc-1-P), which is converted into UDP-GlcNAc by the transfer of uridine 5-monophosphate (from uridine 5-triphosphate), a reaction catalyzed by the N-terminal domain. The protein is Bifunctional protein GlmU of Nitrosococcus oceani (strain ATCC 19707 / BCRC 17464 / JCM 30415 / NCIMB 11848 / C-107).